Here is a 338-residue protein sequence, read N- to C-terminus: Photosystem II assembly lipoprotein Ycf48 (338 aa).

The signal sequence occupies residues 1–23 (MKRLFSNVINLTLVLIVGVALSG). Cys24 carries N-palmitoyl cysteine lipidation. A lipid anchor (S-diacylglycerol cysteine) is attached at Cys24.

The protein belongs to the Ycf48 family. Part of early PSII assembly complexes which includes D1 (psbA) and PsbI; not found in mature PSII. Binds to the lumenal side of PSII complexes. Interacts with YidC.

Its subcellular location is the cellular thylakoid membrane. Its function is as follows. A factor required for optimal assembly of photosystem II (PSII), acting in the early stages of PSII assembly. Also plays a role in replacement of photodamaged D1 (psbA). Assists YidC in synthesis of chlorophyll-binding proteins. The sequence is that of Photosystem II assembly lipoprotein Ycf48 from Prochlorococcus marinus (strain NATL2A).